Here is a 153-residue protein sequence, read N- to C-terminus: Transcription antitermination protein NusB (153 aa).

This sequence belongs to the NusB family.

Its function is as follows. Involved in transcription antitermination. Required for transcription of ribosomal RNA (rRNA) genes. Binds specifically to the boxA antiterminator sequence of the ribosomal RNA (rrn) operons. The polypeptide is Transcription antitermination protein NusB (Fusobacterium nucleatum subsp. nucleatum (strain ATCC 25586 / DSM 15643 / BCRC 10681 / CIP 101130 / JCM 8532 / KCTC 2640 / LMG 13131 / VPI 4355)).